The following is a 379-amino-acid chain: Carbamoyl phosphate synthase small chain (379 aa).

Residues Met-1–Ser-187 form a CPSase region. L-glutamine is bound by residues Ser-48, Gly-239, and Gly-241. In terms of domain architecture, Glutamine amidotransferase type-1 spans Lys-191 to Arg-378. The active-site Nucleophile is the Cys-267. L-glutamine contacts are provided by Leu-268, Gln-271, Asn-309, Gly-311, and Phe-312. Active-site residues include His-351 and Glu-353.

It belongs to the CarA family. In terms of assembly, composed of two chains; the small (or glutamine) chain promotes the hydrolysis of glutamine to ammonia, which is used by the large (or ammonia) chain to synthesize carbamoyl phosphate. Tetramer of heterodimers (alpha,beta)4.

It carries out the reaction hydrogencarbonate + L-glutamine + 2 ATP + H2O = carbamoyl phosphate + L-glutamate + 2 ADP + phosphate + 2 H(+). The enzyme catalyses L-glutamine + H2O = L-glutamate + NH4(+). The protein operates within amino-acid biosynthesis; L-arginine biosynthesis; carbamoyl phosphate from bicarbonate: step 1/1. Its pathway is pyrimidine metabolism; UMP biosynthesis via de novo pathway; (S)-dihydroorotate from bicarbonate: step 1/3. Functionally, small subunit of the glutamine-dependent carbamoyl phosphate synthetase (CPSase). CPSase catalyzes the formation of carbamoyl phosphate from the ammonia moiety of glutamine, carbonate, and phosphate donated by ATP, constituting the first step of 2 biosynthetic pathways, one leading to arginine and/or urea and the other to pyrimidine nucleotides. The small subunit (glutamine amidotransferase) binds and cleaves glutamine to supply the large subunit with the substrate ammonia. The polypeptide is Carbamoyl phosphate synthase small chain (Thioalkalivibrio sulfidiphilus (strain HL-EbGR7)).